We begin with the raw amino-acid sequence, 287 residues long: Glucose import system permease protein GlcU (287 aa).

7 consecutive transmembrane segments (helical) span residues 14-34 (HYLA…AMLI), 76-96 (IIVI…AYFF), 113-133 (VLFS…LLPL), 149-169 (IIFA…SMFI), 194-214 (IVFP…IIQA), 218-238 (FFIP…IAVL), and 250-270 (DTFA…VFLG). The 199-residue stretch at 71 to 269 (LINSLIIVIP…IIPLAIFVFL (199 aa)) folds into the ABC transmembrane type-1 domain.

The protein belongs to the binding-protein-dependent transport system permease family. In terms of assembly, the complex is composed of two ATP-binding proteins (GlcV), two transmembrane proteins (GlcT and GlcU) and a solute-binding protein (GlcS).

It is found in the cell membrane. In terms of biological role, part of the ABC transporter complex GlcSTUV involved in glucose uptake. Responsible for the translocation of the substrate across the membrane. In Saccharolobus solfataricus (strain ATCC 35092 / DSM 1617 / JCM 11322 / P2) (Sulfolobus solfataricus), this protein is Glucose import system permease protein GlcU.